Reading from the N-terminus, the 65-residue chain is Large ribosomal subunit protein bL33m (65 aa).

The transit peptide at Met-1–Phe-8 directs the protein to the mitochondrion.

Belongs to the bacterial ribosomal protein bL33 family. Component of the mitochondrial ribosome large subunit (39S) which comprises a 16S rRNA and about 50 distinct proteins.

It is found in the mitochondrion. The chain is Large ribosomal subunit protein bL33m (MRPL33) from Bos taurus (Bovine).